The following is a 206-amino-acid chain: Probable thymidylate kinase (206 aa).

10–17 (GIDGSGKS) contacts ATP.

This sequence belongs to the thymidylate kinase family.

The catalysed reaction is dTMP + ATP = dTDP + ADP. This is Probable thymidylate kinase from Methanosarcina mazei (strain ATCC BAA-159 / DSM 3647 / Goe1 / Go1 / JCM 11833 / OCM 88) (Methanosarcina frisia).